The primary structure comprises 403 residues: Peptidyl-prolyl cis-trans isomerase FKBP8 (403 aa).

Residues 26–54 (VLDGVDDAEEEDDLSGLPPLEDMGQPTVE) are disordered. A compositionally biased stretch (acidic residues) spans 28 to 39 (DGVDDAEEEDDL). Residues 110–195 (GQVVTVHLQM…CLEVTLKTAE (86 aa)) form the PPIase FKBP-type domain. One copy of the TPR 1 repeat lies at 212-245 (ANRKRECGNAHYQRADFVLAANSYDLAIKAITSN). Glycyl lysine isopeptide (Lys-Gly) (interchain with G-Cter in ubiquitin) cross-links involve residues K240, K262, K264, and K275. TPR repeat units follow at residues 263–296 (VKCL…QPDN) and 297–330 (IKAL…EPSN). A Phosphoserine modification is found at S287. Residues K298, K305, K325, K331, K339, K342, and K343 each participate in a glycyl lysine isopeptide (Lys-Gly) (interchain with G-Cter in ubiquitin) cross-link. A helical membrane pass occupies residues 381–401 (WLFGATAVALGGVALSVVIAA).

In terms of assembly, homomultimers or heteromultimers (Potential). Forms heterodimer with calmodulin. When activated by calmodulin and calcium, interacts with the BH4 domain of BCL2 and weakly with BCLX isoform Bcl-X(L). Does not bind and inhibit calcineurin. Interacts with ZFYVE27; may negatively regulate ZFYVE27 phosphorylation. The cofactor is Ca(2+). Ubiquitinated by PRKN during mitophagy, leading to its degradation and enhancement of mitophagy. Deubiquitinated by USP30.

It is found in the mitochondrion membrane. The catalysed reaction is [protein]-peptidylproline (omega=180) = [protein]-peptidylproline (omega=0). Its function is as follows. Constitutively inactive PPiase, which becomes active when bound to calmodulin and calcium. Seems to act as a chaperone for BCL2, targets it to the mitochondria and modulates its phosphorylation state. The BCL2/FKBP8/calmodulin/calcium complex probably interferes with the binding of BCL2 to its targets. The active form of FKBP8 may therefore play a role in the regulation of apoptosis. The sequence is that of Peptidyl-prolyl cis-trans isomerase FKBP8 (Fkbp8) from Rattus norvegicus (Rat).